A 188-amino-acid polypeptide reads, in one-letter code: dCTP deaminase (188 aa).

Residues 111-116 (KSTYAR), 135-137 (TLE), Gln156, Tyr170, and Gln180 each bind dCTP. Glu137 (proton donor/acceptor) is an active-site residue.

It belongs to the dCTP deaminase family. In terms of assembly, homotrimer.

The enzyme catalyses dCTP + H2O + H(+) = dUTP + NH4(+). The protein operates within pyrimidine metabolism; dUMP biosynthesis; dUMP from dCTP (dUTP route): step 1/2. In terms of biological role, catalyzes the deamination of dCTP to dUTP. The sequence is that of dCTP deaminase from Dechloromonas aromatica (strain RCB).